The sequence spans 247 residues: Anamorsin homolog (247 aa).

The interval 4-128 (FKGLQKSLYI…ETGSSARLSF (125 aa)) is N-terminal SAM-like domain. The interval 129–160 (AKKNASALNVWKISGDDEELIDEEDLLDEEDK) is linker. Residues cysteine 171, cysteine 180, cysteine 183, and cysteine 185 each contribute to the [2Fe-2S] cluster site. The fe-S binding site A stretch occupies residues 171–185 (CSTTGKRKACKNCSC). [4Fe-4S] cluster contacts are provided by cysteine 208, cysteine 211, cysteine 219, and cysteine 222. Short sequence motifs (cx2C motif) lie at residues 208–211 (CGNC) and 219–222 (CSTC). A fe-S binding site B region spans residues 208–222 (CGNCYLGDAFRCSTC).

It belongs to the anamorsin family. As to quaternary structure, monomer. [2Fe-2S] cluster serves as cofactor. [4Fe-4S] cluster is required as a cofactor.

Its subcellular location is the cytoplasm. The protein localises to the mitochondrion intermembrane space. Functionally, component of the cytosolic iron-sulfur (Fe-S) protein assembly (CIA) machinery. Required for the maturation of extramitochondrial Fe-S proteins. Part of an electron transfer chain functioning in an early step of cytosolic Fe-S biogenesis, facilitating the de novo assembly of a [4Fe-4S] cluster on the cytosolic Fe-S scaffold complex. Electrons are transferred from NADPH via a FAD- and FMN-containing diflavin oxidoreductase. Together with the diflavin oxidoreductase, also required for the assembly of the diferric tyrosyl radical cofactor of ribonucleotide reductase (RNR), probably by providing electrons for reduction during radical cofactor maturation in the catalytic small subunit. This is Anamorsin homolog from Drosophila persimilis (Fruit fly).